The primary structure comprises 236 residues: Uridylate kinase (236 aa).

8 to 11 (KLSG) provides a ligand contact to ATP. Positions 16-21 (GEQGYG) are involved in allosteric activation by GTP. G51 and R55 together coordinate ATP. Residues D70 and 131-138 (TGNPYFST) contribute to the UMP site. ATP is bound by residues N159, Y165, and D168.

This sequence belongs to the UMP kinase family. Homohexamer.

The protein resides in the cytoplasm. The catalysed reaction is UMP + ATP = UDP + ADP. It functions in the pathway pyrimidine metabolism; CTP biosynthesis via de novo pathway; UDP from UMP (UMPK route): step 1/1. Allosterically activated by GTP. Inhibited by UTP. In terms of biological role, catalyzes the reversible phosphorylation of UMP to UDP. The chain is Uridylate kinase from Shouchella clausii (strain KSM-K16) (Alkalihalobacillus clausii).